The primary structure comprises 335 residues: Nucleoid-associated protein PC1_1634 (335 aa).

This sequence belongs to the YejK family.

It localises to the cytoplasm. It is found in the nucleoid. The sequence is that of Nucleoid-associated protein PC1_1634 from Pectobacterium carotovorum subsp. carotovorum (strain PC1).